Reading from the N-terminus, the 1030-residue chain is Semaphorin-6A (1030 aa).

The first 18 residues, 1–18 (MRSEALLLYFTLLHFAGA), serve as a signal peptide directing secretion. The Extracellular portion of the chain corresponds to 19–649 (GFPEDSEPIS…KGHDQLVPVT (631 aa)). Residues 24 to 512 (SEPISISHGN…FSTCVIKVPL (489 aa)) enclose the Sema domain. N-linked (GlcNAc...) asparagine glycosylation is found at Asn33, Asn49, and Asn65. Disulfide bonds link Cys107–Cys117, Cys135–Cys144, Cys258–Cys369, and Cys283–Cys328. A glycan (N-linked (GlcNAc...) asparagine) is linked at Asn282. N-linked (GlcNAc...) asparagine glycosylation is found at Asn434 and Asn461. Intrachain disulfides connect Cys477–Cys506, Cys515–Cys533, Cys521–Cys568, and Cys525–Cys542. The chain crosses the membrane as a helical span at residues 650–670 (LLAIAVILAFVMGAVFSGITV). The Cytoplasmic segment spans residues 671–1030 (YCVCDHRRKD…TSMKPNDACT (360 aa)). Ser698 carries the phosphoserine modification. Disordered regions lie at residues 754–778 (ALPT…REWE), 860–897 (SSKS…SLSQ), and 912–1030 (YGVD…DACT). The segment covering 920–936 (YPTNSLTRSHQATTLKR) has biased composition (polar residues). Residues 937–952 (NNTNSSNSSHLSRNQS) show a composition bias toward low complexity. Ser952 is modified (phosphoserine). Composition is skewed to polar residues over residues 970–997 (QVHS…SLTR) and 1018–1030 (PLST…DACT).

It belongs to the semaphorin family. In terms of assembly, active as a homodimer or oligomer. The SEMA6A homodimer interacts with a PLXNA2 homodimer, giving rise to a heterotetramer. Interacts with EVL. As to quaternary structure, (Microbial infection) Interacts with P.sordellii toxin TcsL; semaphorins SEMA6A and SEMA6B constitute the major host receptors for TcsL in the vascular endothelium.

Its subcellular location is the cell membrane. Functionally, cell surface receptor for PLXNA2 that plays an important role in cell-cell signaling. Required for normal granule cell migration in the developing cerebellum. Promotes reorganization of the actin cytoskeleton and plays an important role in axon guidance in the developing central nervous system. Can act as repulsive axon guidance cue. Has repulsive action towards migrating granular neurons. May play a role in channeling sympathetic axons into the sympathetic chains and controlling the temporal sequence of sympathetic target innervation. Its function is as follows. (Microbial infection) Acts as a receptor for P.sordellii toxin TcsL in the in the vascular endothelium. In Homo sapiens (Human), this protein is Semaphorin-6A (SEMA6A).